A 1241-amino-acid chain; its full sequence is uncharacterized protein (1241 aa).

A coiled-coil region spans residues 21-49 (ILNDNVREINIAKKEIKQLREYVGILQQN). 3 consecutive transmembrane segments (helical) span residues 261 to 281 (VNAI…FVLG), 918 to 938 (AVVG…GLVA), and 947 to 967 (GHIV…VIGG). The tract at residues 1005–1028 (THIGKEDSNNGVSTSTNKRSIGKA) is disordered. Residues 1013–1028 (NNGVSTSTNKRSIGKA) are compositionally biased toward polar residues.

Its subcellular location is the host membrane. This is an uncharacterized protein from Diadromus pulchellus (Parasitic wasp).